Here is a 380-residue protein sequence, read N- to C-terminus: Cytochrome b (380 aa).

Transmembrane regions (helical) follow at residues 34–54 (FGSLLGVCLLTQILTGLLLAM), 78–99 (WLIRNLHANGASFFFICIYLHI), 114–134 (WNTGVILLLTLMATAFVGYVL), and 179–199 (FFALHFLLPFMIAGLTLIHLT). Residues His-84 and His-98 each coordinate heme b. Positions 183 and 197 each coordinate heme b. His-202 lines the a ubiquinone pocket. A run of 4 helical transmembrane segments spans residues 227 to 247 (LKDILGFMLMFLPLTTLALFS), 289 to 309 (LGGVLALAASVLVLFLAPFLH), 321 to 341 (LSQLLFWILVANLFILTWVGS), and 348 to 368 (FIIIGQLASLTYFTILLILFP).

It belongs to the cytochrome b family. In terms of assembly, the cytochrome bc1 complex contains 11 subunits: 3 respiratory subunits (MT-CYB, CYC1 and UQCRFS1), 2 core proteins (UQCRC1 and UQCRC2) and 6 low-molecular weight proteins (UQCRH/QCR6, UQCRB/QCR7, UQCRQ/QCR8, UQCR10/QCR9, UQCR11/QCR10 and a cleavage product of UQCRFS1). This cytochrome bc1 complex then forms a dimer. It depends on heme b as a cofactor.

It localises to the mitochondrion inner membrane. Component of the ubiquinol-cytochrome c reductase complex (complex III or cytochrome b-c1 complex) that is part of the mitochondrial respiratory chain. The b-c1 complex mediates electron transfer from ubiquinol to cytochrome c. Contributes to the generation of a proton gradient across the mitochondrial membrane that is then used for ATP synthesis. The polypeptide is Cytochrome b (MT-CYB) (Calonectris leucomelas (Streaked shearwater)).